A 536-amino-acid polypeptide reads, in one-letter code: Probable pectinesterase/pectinesterase inhibitor 59 (536 aa).

The signal sequence occupies residues 1 to 30 (MNMMMQKLSILFLHLILLVLLCVHPLTTVA). Residues 31-183 (DRNSTDWCDK…SHLISNCLAV (153 aa)) are pectinesterase inhibitor 59. N-linked (GlcNAc...) asparagine glycans are attached at residues asparagine 33, asparagine 91, asparagine 116, asparagine 159, and asparagine 195. The pectinesterase 59 stretch occupies residues 221–522 (NLVVAKDGSG…FTVGKFIAGT (302 aa)). Residues threonine 298 and glutamine 328 each contribute to the substrate site. The active-site Proton donor; for pectinesterase activity is aspartate 351. A disulfide bridge connects residues cysteine 365 and cysteine 385. The Nucleophile; for pectinesterase activity role is filled by aspartate 372. Substrate contacts are provided by arginine 440 and tryptophan 442.

In the N-terminal section; belongs to the PMEI family. It in the C-terminal section; belongs to the pectinesterase family. In terms of tissue distribution, expressed in siliques.

It is found in the secreted. The protein resides in the cell wall. It carries out the reaction [(1-&gt;4)-alpha-D-galacturonosyl methyl ester](n) + n H2O = [(1-&gt;4)-alpha-D-galacturonosyl](n) + n methanol + n H(+). Its pathway is glycan metabolism; pectin degradation; 2-dehydro-3-deoxy-D-gluconate from pectin: step 1/5. Its function is as follows. Acts in the modification of cell walls via demethylesterification of cell wall pectin. The chain is Probable pectinesterase/pectinesterase inhibitor 59 (PME59) from Arabidopsis thaliana (Mouse-ear cress).